The primary structure comprises 221 residues: Histone H1C (221 aa).

Disordered regions lie at residues methionine 1–serine 43 and alanine 113–alanine 221. The 75-residue stretch at threonine 38–alanine 112 folds into the H15 domain. Composition is skewed to basic residues over residues lysine 141–lysine 167 and alanine 175–alanine 221.

It belongs to the histone H1/H5 family.

Its subcellular location is the nucleus. The protein resides in the chromosome. Functionally, histones H1 are necessary for the condensation of nucleosome chains into higher-order structures. The polypeptide is Histone H1C (Chironomus tentans (Midge)).